Reading from the N-terminus, the 200-residue chain is Dephospho-CoA kinase (200 aa).

The 197-residue stretch at 4–200 (TIGLTGSVAT…TFIERFVNNK (197 aa)) folds into the DPCK domain. 12–17 (ATGKST) contributes to the ATP binding site.

Belongs to the CoaE family.

The protein localises to the cytoplasm. It carries out the reaction 3'-dephospho-CoA + ATP = ADP + CoA + H(+). It participates in cofactor biosynthesis; coenzyme A biosynthesis; CoA from (R)-pantothenate: step 5/5. Catalyzes the phosphorylation of the 3'-hydroxyl group of dephosphocoenzyme A to form coenzyme A. This Listeria innocua serovar 6a (strain ATCC BAA-680 / CLIP 11262) protein is Dephospho-CoA kinase.